Here is a 32-residue protein sequence, read N- to C-terminus: Photosystem I reaction center subunit XII (32 aa).

Residues 9–28 (VYIALVVALIPGLLAWRLAT) form a helical membrane-spanning segment.

This sequence belongs to the PsaM family.

It is found in the cellular thylakoid membrane. The protein is Photosystem I reaction center subunit XII of Nostoc sp. (strain PCC 7120 / SAG 25.82 / UTEX 2576).